A 269-amino-acid polypeptide reads, in one-letter code: ATP synthase subunit gamma, mitochondrial (269 aa).

F-type ATP synthases have 2 components, the catalytic core F(1) and the membrane-embedded component F(0), linked together by a central stalk and a peripheral stalk. The central stalk, also called rotor shaft, is often seen as part of F(1). The peripheral stalk is seen as part of F(0). F(0) contains the membrane channel next to the rotor. F-type ATP synthases form dimers but each monomer functions independently in ATP generation. The dimer consists of 18 different polypeptides: ATP1 (subunit alpha, part of F(1), 3 molecules per monomer), ATP2 (subunit beta, part of F(1), 3 molecules per monomer), ATP3 (subunit gamma, part of the central stalk), ATP4 (subunit b, part of the peripheral stalk), ATP5/OSCP (subunit 5/OSCP, part of the peripheral stalk), ATP6 (subunit a, part of the peripheral stalk), ATP7 (subunit d, part of the peripheral stalk), ATP8 (subunit 8, part of the peripheral stalk), OLI1 (subunit c, part of the rotor, 10 molecules per monomer), ATP14 (subunit h, part of the peripheral stalk), ATP15 (subunit epsilon, part of the central stalk), ATP16 (subunit delta, part of the central stalk), ATP17 (subunit f, part of the peripheral stalk), ATP18 (subunit i/j, part of the peripheral stalk). Dimer-specific subunits are ATP19 (subunit k, at interface between monomers), ATP20 (subunit g, at interface between monomers), TIM11 (subunit e, at interface between monomers). Also contains subunit L.

Its subcellular location is the mitochondrion inner membrane. Mitochondrial membrane ATP synthase (F(1)F(0) ATP synthase or Complex V) produces ATP from ADP in the presence of a proton gradient across the membrane which is generated by electron transport complexes of the respiratory chain. F-type ATP synthases consist of two structural domains, F(1) - containing the extramembraneous catalytic core, and F(0) - containing the membrane proton channel, linked together by a central stalk and a peripheral stalk. During catalysis, ATP synthesis in the catalytic domain of F(1) is coupled via a rotary mechanism of the central stalk subunits to proton translocation. Part of the complex F(1) domain and the central stalk which is part of the complex rotary element. The gamma/ATP3 subunit protrudes into the catalytic domain formed of alpha/ATP1(3)beta/ATP2(3). Rotation of the central stalk against the surrounding alpha/ATP1(3)beta/ATP2(3) subunits leads to hydrolysis of ATP in three separate catalytic sites on the beta/ATP2 subunits. The sequence is that of ATP synthase subunit gamma, mitochondrial from Pichia angusta (Yeast).